Here is a 142-residue protein sequence, read N- to C-terminus: Transcription antitermination protein NusB (142 aa).

The protein belongs to the NusB family.

Its function is as follows. Involved in transcription antitermination. Required for transcription of ribosomal RNA (rRNA) genes. Binds specifically to the boxA antiterminator sequence of the ribosomal RNA (rrn) operons. This is Transcription antitermination protein NusB from Streptomyces coelicolor (strain ATCC BAA-471 / A3(2) / M145).